A 255-amino-acid polypeptide reads, in one-letter code: Phosphoribosylformylglycinamidine synthase subunit PurQ (255 aa).

Residues 6-255 form the Glutamine amidotransferase type-1 domain; sequence TLILRTPGTN…TNAVKWARQV (250 aa). Cysteine 96 serves as the catalytic Nucleophile. Active-site residues include histidine 217 and glutamate 219.

In terms of assembly, part of the FGAM synthase complex composed of 1 PurL, 1 PurQ and 2 PurS subunits.

It localises to the cytoplasm. The enzyme catalyses N(2)-formyl-N(1)-(5-phospho-beta-D-ribosyl)glycinamide + L-glutamine + ATP + H2O = 2-formamido-N(1)-(5-O-phospho-beta-D-ribosyl)acetamidine + L-glutamate + ADP + phosphate + H(+). The catalysed reaction is L-glutamine + H2O = L-glutamate + NH4(+). Its pathway is purine metabolism; IMP biosynthesis via de novo pathway; 5-amino-1-(5-phospho-D-ribosyl)imidazole from N(2)-formyl-N(1)-(5-phospho-D-ribosyl)glycinamide: step 1/2. Part of the phosphoribosylformylglycinamidine synthase complex involved in the purines biosynthetic pathway. Catalyzes the ATP-dependent conversion of formylglycinamide ribonucleotide (FGAR) and glutamine to yield formylglycinamidine ribonucleotide (FGAM) and glutamate. The FGAM synthase complex is composed of three subunits. PurQ produces an ammonia molecule by converting glutamine to glutamate. PurL transfers the ammonia molecule to FGAR to form FGAM in an ATP-dependent manner. PurS interacts with PurQ and PurL and is thought to assist in the transfer of the ammonia molecule from PurQ to PurL. This is Phosphoribosylformylglycinamidine synthase subunit PurQ from Dehalococcoides mccartyi (strain ATCC BAA-2266 / KCTC 15142 / 195) (Dehalococcoides ethenogenes (strain 195)).